We begin with the raw amino-acid sequence, 542 residues long: 4-coumarate--CoA ligase-like 5 (542 aa).

Ser-204, Ser-205, Gly-206, Thr-207, Thr-208, and Lys-212 together coordinate ATP. Phe-262 contacts (E)-4-coumaroyl-AMP. Arg-282 is a binding site for CoA. The segment at 284–353 (DFIAALRAIE…SVFPNVELVQ (70 aa)) is SBD1. (E)-4-coumaroyl-AMP is bound by residues Gly-331, Gln-353, Gly-354, and Thr-358. Residues Gln-353, Gly-354, Thr-358, Asp-418, and Arg-433 each contribute to the ATP site. The tract at residues 354-397 (GYGLTESSGAVAATVGPEESKAYGSVGKLGSHLQAKIVDPSTGY) is SBD2. Positions 435 and 439 each coordinate (E)-4-coumaroyl-AMP. The CoA site is built by Lys-441 and Gly-442. Lys-524 is a binding site for ATP.

Belongs to the ATP-dependent AMP-binding enzyme family. Mg(2+) is required as a cofactor.

It carries out the reaction (E)-4-coumarate + ATP + CoA = (E)-4-coumaroyl-CoA + AMP + diphosphate. The enzyme catalyses (E)-4-coumarate + ATP + H(+) = (E)-4-coumaroyl-AMP + diphosphate. The catalysed reaction is (E)-4-coumaroyl-AMP + CoA = (E)-4-coumaroyl-CoA + AMP + H(+). In terms of biological role, carboxylate--CoA ligase that may use 4-coumarate as substrate. Follows a two-step reaction mechanism, wherein the carboxylate substrate first undergoes adenylation by ATP, followed by a thioesterification in the presence of CoA to yield the final CoA thioester. This is 4-coumarate--CoA ligase-like 5 (4CLL5) from Oryza sativa subsp. japonica (Rice).